The following is a 210-amino-acid chain: Mitochondrial import receptor subunit TOM20-2 (210 aa).

Methionine 1 carries the N-acetylmethionine modification. Residues methionine 1–glutamate 178 are Cytoplasmic-facing. TPR repeat units follow at residues leucine 42 to lysine 75 and alanine 83 to asparagine 120. Residues glycine 151–methionine 161 show a composition bias toward gly residues. Residues glycine 151–lysine 172 are disordered. Residues phenylalanine 179–methionine 199 form a helical membrane-spanning segment. The Mitochondrial intermembrane portion of the chain corresponds to alanine 200–arginine 210.

This sequence belongs to the Tom20 family. Forms part of the preprotein translocase complex of the outer mitochondrial membrane (TOM complex) which consists of at least 6 different proteins (TOM5, TOM6, TOM7, TOM20, TOM22/TOM9 and TOM40). Component of a mitochondrial large protein complex that contains, at least, MIC60, DGS1, TOM40, TOM20 proteins, and petC/RISP. The N-terminus is blocked. In terms of tissue distribution, expressed in roots, flowers, young cotyledons and leaves.

The protein resides in the mitochondrion outer membrane. Functionally, central component of the receptor complex responsible for the recognition and translocation of cytosolically synthesized mitochondrial preproteins. Together with TOM22 functions as the transit peptide receptor at the surface of the mitochondrion outer membrane and facilitates the movement of preproteins into the translocation pore. This Arabidopsis thaliana (Mouse-ear cress) protein is Mitochondrial import receptor subunit TOM20-2.